The primary structure comprises 592 residues: Protein kinase C zeta type (592 aa).

The PB1 domain occupies 15–98; it reads RVRLKAHYGG…EGLIIHVFPS (84 aa). An interaction with SQSTM1 region spans residues 79-145; that stretch reads AFRLARQCRD…KRFNRRAYCG (67 aa). Residues 130–180 form a Phorbol-ester/DAG-type zinc finger; the sequence is GHLFQAKRFNRRAYCGQCSERIWGLARQGYRCINCKLLVHKRCHGLVPLTC. The region spanning 252 to 518 is the Protein kinase domain; sequence FDLIRVIGRG…FSDIKSHAFF (267 aa). ATP contacts are provided by residues 258-266 and lysine 281; that span reads IGRGSYAKV. The active-site Proton acceptor is aspartate 376. Position 410 is a phosphothreonine; by PDPK1 and PI3K (threonine 410). In terms of domain architecture, AGC-kinase C-terminal spans 519-590; the sequence is RSIDWDLLEK…INPLLLSTEE (72 aa). Threonine 560 is subject to Phosphothreonine. Serine 591 is modified (phosphoserine).

This sequence belongs to the protein kinase superfamily. AGC Ser/Thr protein kinase family. PKC subfamily. As to quaternary structure, forms a ternary complex with SQSTM1 and KCNAB2. Forms another ternary complex with SQSTM1 and GABRR3. Forms a complex with SQSTM1 and MAP2K5. Interacts with PARD6A, PARD6B, PARD6G and SQSTM1. Part of a complex with PARD3, PARD6A or PARD6B or PARD6G and CDC42 or RAC1. Interacts with ADAP1/CENTA1. Forms a ternary complex composed of SQSTM1 and PAWR. Interacts directly with SQSTM1. Interacts with IKBKB. Interacts (via the protein kinase domain) with WWC1. Forms a tripartite complex with WWC1 and DDR1, but predominantly in the absence of collagen. Component of the Par polarity complex, composed of at least phosphorylated PRKCZ, PARD3 and TIAM1. Interacts with PDPK1 (via N-terminal region). Interacts with WDFY2 (via WD repeats 1-3). Interacts with VAMP2. Forms a complex with WDFY2 and VAMP2. Interacts with APPL1. Interacts with WWC1, WWC2 and WWC3. In terms of processing, CDH5 is required for its phosphorylation at Thr-410. Phosphorylated by protein kinase PDPK1; phosphorylation is inhibited by the apoptotic C-terminal cleavage product of PKN2. Phosphorylation at Thr-410 by PI3K activates the kinase. In terms of tissue distribution, expressed in brain, and to a lesser extent in lung, kidney and testis.

The protein localises to the cytoplasm. It is found in the endosome. It localises to the cell junction. Its subcellular location is the membrane. The catalysed reaction is L-seryl-[protein] + ATP = O-phospho-L-seryl-[protein] + ADP + H(+). It catalyses the reaction L-threonyl-[protein] + ATP = O-phospho-L-threonyl-[protein] + ADP + H(+). With respect to regulation, atypical PKCs (PRKCI and PRKCZ) exhibit an elevated basal enzymatic activity (that may be due to the interaction with SMG1 or SQSTM1) and are not regulated by diacylglycerol, phosphatidylserine, phorbol esters or calcium ions. Two specific sites, Thr-410 (activation loop of the kinase domain) and Thr-560 (turn motif), need to be phosphorylated for its full activation. Phosphatidylinositol 3,4,5-trisphosphate might be a physiological activator. Isoform 2: Constitutively active. Its function is as follows. Calcium- and diacylglycerol-independent serine/threonine-protein kinase that functions in phosphatidylinositol 3-kinase (PI3K) pathway and mitogen-activated protein (MAP) kinase cascade, and is involved in NF-kappa-B activation, mitogenic signaling, cell proliferation, cell polarity, inflammatory response and maintenance of long-term potentiation (LTP). Upon lipopolysaccharide (LPS) treatment in macrophages, or following mitogenic stimuli, functions downstream of PI3K to activate MAP2K1/MEK1-MAPK1/ERK2 signaling cascade independently of RAF1 activation. Required for insulin-dependent activation of AKT3, but may function as an adapter rather than a direct activator. Upon insulin treatment may act as a downstream effector of PI3K and contribute to the activation of translocation of the glucose transporter SLC2A4/GLUT4 and subsequent glucose transport in adipocytes. In EGF-induced cells, binds and activates MAP2K5/MEK5-MAPK7/ERK5 independently of its kinase activity and can activate JUN promoter through MEF2C. Through binding with SQSTM1/p62, functions in interleukin-1 signaling and activation of NF-kappa-B with the specific adapters RIPK1 and TRAF6. Participates in TNF-dependent transactivation of NF-kappa-B by phosphorylating and activating IKBKB kinase, which in turn leads to the degradation of NF-kappa-B inhibitors. In migrating astrocytes, forms a cytoplasmic complex with PARD6A and is recruited by CDC42 to function in the establishment of cell polarity along with the microtubule motor and dynein. In association with FEZ1, stimulates neuronal differentiation in PC12 cells. In the inflammatory response, is required for the T-helper 2 (Th2) differentiation process, including interleukin production, efficient activation of JAK1 and the subsequent phosphorylation and nuclear translocation of STAT6. May be involved in development of allergic airway inflammation (asthma), a process dependent on Th2 immune response. In the NF-kappa-B-mediated inflammatory response, can relieve SETD6-dependent repression of NF-kappa-B target genes by phosphorylating the RELA subunit at 'Ser-311'. Phosphorylates VAMP2 in vitro. Phosphorylates and activates LRRK1, which phosphorylates RAB proteins involved in intracellular trafficking. In terms of biological role, involved in late synaptic long term potention phase in CA1 hippocampal cells and long term memory maintenance. This chain is Protein kinase C zeta type (PRKCZ), found in Homo sapiens (Human).